Consider the following 324-residue polypeptide: tRNA N6-adenosine threonylcarbamoyltransferase (324 aa).

Positions 107, 111, and 127 each coordinate Fe cation. Substrate is bound by residues 127–131, aspartate 159, glycine 172, glutamate 176, and asparagine 257; that span reads YVSGG. Aspartate 285 contributes to the Fe cation binding site.

It belongs to the KAE1 / TsaD family. In terms of assembly, monomer. Component of the KEOPS complex that consists of Kae1, Bud32, Cgi121 and Pcc1; the whole complex dimerizes. Fe(2+) is required as a cofactor.

It localises to the cytoplasm. The catalysed reaction is L-threonylcarbamoyladenylate + adenosine(37) in tRNA = N(6)-L-threonylcarbamoyladenosine(37) in tRNA + AMP + H(+). Its function is as follows. Required for the formation of a threonylcarbamoyl group on adenosine at position 37 (t(6)A37) in tRNAs that read codons beginning with adenine. Is a component of the KEOPS complex that is probably involved in the transfer of the threonylcarbamoyl moiety of threonylcarbamoyl-AMP (TC-AMP) to the N6 group of A37. Kae1 likely plays a direct catalytic role in this reaction, but requires other protein(s) of the complex to fulfill this activity. The chain is tRNA N6-adenosine threonylcarbamoyltransferase from Thermococcus sibiricus (strain DSM 12597 / MM 739).